The primary structure comprises 134 residues: Small ribosomal subunit protein uS11 (134 aa).

Disordered regions lie at residues 1–22 (MPPK…KNVA) and 114–134 (SIQD…RRRV). Residues 9-22 (AAKKVRRKEKKNVA) are compositionally biased toward basic residues.

The protein belongs to the universal ribosomal protein uS11 family. As to quaternary structure, part of the 30S ribosomal subunit. Interacts with proteins S7 and S18. Binds to IF-3.

Functionally, located on the platform of the 30S subunit, it bridges several disparate RNA helices of the 16S rRNA. Forms part of the Shine-Dalgarno cleft in the 70S ribosome. The chain is Small ribosomal subunit protein uS11 from Streptomyces coelicolor (strain ATCC BAA-471 / A3(2) / M145).